The primary structure comprises 59 residues: Protein translocase subunit SecE (59 aa).

Residues 33-53 (GAGIALVGLLGFIIFAVMTFV) form a helical membrane-spanning segment.

This sequence belongs to the SecE/SEC61-gamma family. As to quaternary structure, component of the Sec protein translocase complex. Heterotrimer consisting of SecY (alpha), SecG (beta) and SecE (gamma) subunits. The heterotrimers can form oligomers, although 1 heterotrimer is thought to be able to translocate proteins. Interacts with the ribosome. May interact with SecDF, and other proteins may be involved.

The protein localises to the cell membrane. Its function is as follows. Essential subunit of the Sec protein translocation channel SecYEG. Clamps together the 2 halves of SecY. May contact the channel plug during translocation. This Haloarcula marismortui (strain ATCC 43049 / DSM 3752 / JCM 8966 / VKM B-1809) (Halobacterium marismortui) protein is Protein translocase subunit SecE.